Reading from the N-terminus, the 432-residue chain is Luc7-like protein 3 (432 aa).

An N-acetylmethionine modification is found at Met1. A phosphoserine mark is found at Ser3, Ser110, and Ser115. Positions 124 to 181 (KNEEKIQVLTDKIDVLLQQIEELGSEGKVEEAQGMMKLVEQLKEERELLRSTTSTIES) form a coiled coil. Position 231 is an N6-acetyllysine (Lys231). Over residues 234–287 (LRKRTEEPDRDERLKKEKQEREEREKEREREREERERKRRREEEEREKERARDR) the composition is skewed to basic and acidic residues. The disordered stretch occupies residues 234–432 (LRKRTEEPDR…IKSEGDTQSN (199 aa)). Residues 288–301 (ERRKRSRSRSRHSS) are compositionally biased toward basic residues. A compositionally biased stretch (basic and acidic residues) spans 302 to 311 (RTSDRRCSRS). The segment covering 312–367 (RDHKRSRSRDRRRSRSRDRRRSRSHDRSERKHRSRSRDRRRSKSRDRKSYKHRSKS) has biased composition (basic residues). Basic and acidic residues predominate over residues 368–414 (RDREQDRKSKEKEKKGSDDKKSSVKSSSREKQSEDTNPESKESDTKN). At Ser420 the chain carries Phosphoserine. Basic and acidic residues predominate over residues 421–432 (EDIKSEGDTQSN). Lys424 participates in a covalent cross-link: Glycyl lysine isopeptide (Lys-Gly) (interchain with G-Cter in SUMO1); alternate. Residue Lys424 forms a Glycyl lysine isopeptide (Lys-Gly) (interchain with G-Cter in SUMO2); alternate linkage. Ser425 and Ser431 each carry phosphoserine.

It belongs to the Luc7 family. In terms of assembly, may interact with SFRS1 and form homodimers. Interacts with JMJD6. Interacts with RBM25. Interacts with RSRC1 (via Arg/Ser-rich domain). Interacts with RRP1B.

The protein resides in the nucleus speckle. Its function is as follows. Binds cAMP regulatory element DNA sequence. May play a role in RNA splicing. The polypeptide is Luc7-like protein 3 (Luc7l3) (Mus musculus (Mouse)).